A 148-amino-acid chain; its full sequence is Single-stranded DNA-binding protein 1-B, mitochondrial (148 aa).

The N-terminal 17 residues, 1–17 (MFHRPVLQVFRQFARCQ), are a transit peptide targeting the mitochondrion. In terms of domain architecture, SSB spans 30–142 (MNKVQLLGRV…IIADNIIFLT (113 aa)).

As to quaternary structure, homotetramer.

The protein localises to the mitochondrion. Its subcellular location is the mitochondrion matrix. It localises to the mitochondrion nucleoid. Functionally, binds preferentially and cooperatively to pyrimidine rich single-stranded DNA (ss-DNA). Required to maintain the copy number of mitochondrial DNA (mtDNA) and plays crucial roles during mtDNA replication that stimulate activity of the DNA polymerase at the replication fork. May also function in mtDNA repair. This chain is Single-stranded DNA-binding protein 1-B, mitochondrial (ssbp1-b), found in Xenopus laevis (African clawed frog).